Reading from the N-terminus, the 167-residue chain is Lipoprotein signal peptidase (167 aa).

3 helical membrane passes run 7–27 (LFLL…KYWV), 61–81 (FSHW…LWLW), and 87–107 (NKFL…GNLI). Active-site residues include D117 and D136. Residues 126–146 (IFYFAIFNLADSFITLGVIVI) form a helical membrane-spanning segment.

The protein belongs to the peptidase A8 family.

It localises to the cell inner membrane. It catalyses the reaction Release of signal peptides from bacterial membrane prolipoproteins. Hydrolyzes -Xaa-Yaa-Zaa-|-(S,diacylglyceryl)Cys-, in which Xaa is hydrophobic (preferably Leu), and Yaa (Ala or Ser) and Zaa (Gly or Ala) have small, neutral side chains.. It participates in protein modification; lipoprotein biosynthesis (signal peptide cleavage). Functionally, this protein specifically catalyzes the removal of signal peptides from prolipoproteins. The polypeptide is Lipoprotein signal peptidase (Bartonella tribocorum (strain CIP 105476 / IBS 506)).